The sequence spans 201 residues: Large ribosomal subunit protein uL4 (201 aa).

The disordered stretch occupies residues 43-73 (SRGQKTRAEVTGSGKKPWRQKGTGRARSGSV).

It belongs to the universal ribosomal protein uL4 family. In terms of assembly, part of the 50S ribosomal subunit.

One of the primary rRNA binding proteins, this protein initially binds near the 5'-end of the 23S rRNA. It is important during the early stages of 50S assembly. It makes multiple contacts with different domains of the 23S rRNA in the assembled 50S subunit and ribosome. In terms of biological role, forms part of the polypeptide exit tunnel. In Sodalis glossinidius (strain morsitans), this protein is Large ribosomal subunit protein uL4.